The primary structure comprises 65 residues: Large ribosomal subunit protein uL29 (65 aa).

It belongs to the universal ribosomal protein uL29 family.

The protein is Large ribosomal subunit protein uL29 of Brevibacillus brevis (strain 47 / JCM 6285 / NBRC 100599).